Reading from the N-terminus, the 467-residue chain is Neurexin-1-beta (467 aa).

The signal sequence occupies residues 1–45; sequence MYQRMLRCGAELGSPGGGGGGAGGRLALLWIVPLTLSGLLGVAWG. Topologically, residues 46–391 are extracellular; the sequence is ASSLGAHHIH…EVIRESSSTT (346 aa). In terms of domain architecture, Laminin G-like spans 86 to 284; that stretch reads YIFSKGGGQI…DANIAIVGNV (199 aa). 2 residues coordinate Ca(2+): aspartate 136 and valine 153. A glycan (N-linked (GlcNAc...) asparagine) is linked at asparagine 183. The segment at 200-229 is essential for interaction with CBLN1; modulates interaction affinity with NLGN1, NLGN2 and NLGN3; prevents interaction with DAG1/alpha-dystroglycan; modulates interaction with alpha-latrotoxin; that stretch reads GNNDNERLAIARQRIPYRLGRVVDEWLLDK. Ca(2+)-binding residues include isoleucine 235 and asparagine 237. Positions 318–380 are disordered; sequence LATSTARRGN…AGGREPYPGS (63 aa). The span at 324 to 339 shows a compositional bias: polar residues; the sequence is RRGNSPTKEPVSQTTD. Residue serine 345 is glycosylated (O-linked (Xyl...) (heparan sulfate) serine). A helical transmembrane segment spans residues 392–412; the sequence is GMVVGIVAAAALCILILLYAM. The Cytoplasmic segment spans residues 413–467; the sequence is YKYRNRDEGSYHVDESRNYISNSAQSNGAVVKEKQPSSAKSANKNKKNKDKEYYV. Residues 434–467 are disordered; the sequence is NSAQSNGAVVKEKQPSSAKSANKNKKNKDKEYYV. Serine 449, serine 450, and serine 453 each carry phosphoserine.

Belongs to the neurexin family. In terms of assembly, the cytoplasmic C-terminal region binds to CASK. Binds NLGN1, NLGN2 and NLGN3, DAG1 (alpha-dystroglycan) and alpha-latrotoxin. Binding to neuroligins is calcium-dependent, and the binding preference ranks as follow: NLGN1 &gt; NLGN4 &gt;&gt; NLGN3 &gt; NLGN2. Interacts with CBLN2 and more weakly with CBLN4. Interacts with CBLN1; interaction is CBLN1 hexamer form-dependent; CBLN1-binding is calcium-independent; isoform 1b does not interact with CBLN1. Interacts with CLSTN3. O-glycosylated; contains heparan sulfate. Heparan sulfate attachment is required for synapse development by mediating interactions with neuroligins.

The protein resides in the presynaptic cell membrane. Neuronal cell surface protein involved in cell recognition and cell adhesion by forming intracellular junctions through binding to neuroligins. Plays a role in formation of synaptic junctions. Functions as part of a trans-synaptic complex by binding to cerebellins and postsynaptic GRID1. This interaction helps regulate the activity of NMDA and AMPA receptors at hippocampal synapses without affecting synapse formation. NRXN1B-CBLN2-GRID1 complex transduce presynaptic signals into postsynaptic NMDAR response. The sequence is that of Neurexin-1-beta from Bos taurus (Bovine).